We begin with the raw amino-acid sequence, 146 residues long: Large ribosomal subunit protein uL15 (146 aa).

The interval 1 to 46 (MLHQIKPFKGARKTVKRLGRGCGSGTGKTSGKGHKGQLARSGGGVR) is disordered. The segment covering 9-19 (KGARKTVKRLG) has biased composition (basic residues). The span at 20-30 (RGCGSGTGKTS) shows a compositional bias: gly residues.

It belongs to the universal ribosomal protein uL15 family. In terms of assembly, part of the 50S ribosomal subunit.

Functionally, binds to the 23S rRNA. The sequence is that of Large ribosomal subunit protein uL15 from Phytoplasma mali (strain AT).